We begin with the raw amino-acid sequence, 566 residues long: MFPFGPHSPGGDETAGAEEPPPLGGPAAASRPPSPAPRPASPQRGADAASPPPVAGSPRLPGGPAVSPAERAGEFAAPGALELSAATASASQAKLSPSSSPRRRSRPDWRAGGRSRQGLGAGLGGPGARLFGWLRERSLGRGLFVDPARDNFRTMTNLYGSIHPADSVYLSTRTHGAVFNLEYSPDGSVLTVACEQTEVLLFDPISSKHIKTLSEAHEDCVNNIRFLDNRLFATCSDDTTIALWDLRKLNTKVCTLHGHTSWVKNIEYDTNTRLLVTSGFDGNVIIWDTNRCTEDGCPHKKFFHTRFLMRMRLTPDCSKMLISTSSGYLLILHELDLTKSLEVGSYPILRARRTTSSSDLTTTSSSSGSRVSGSPCHHNDSNSTEKHMSRASQREGVSPRNSLEVLTPEVPGERDRGNCITSLQLHPKGWATLLRCSSNTDDQEWTCVYEFQEGAPVRPVSPRCSLRLTHYIEEANVGRGYIKELCFSPDGRMISSPHGYGIRLLGFDKQCSELVDCLPKEASPLRVIRSLYSHNDVVLTTKFSPTHCQIASGCLSGRVSLYQPKF.

2 disordered regions span residues 1 to 72 (MFPF…AERA) and 87 to 123 (TASASQAKLSPSSSPRRRSRPDWRAGGRSRQGLGAGL). Phosphoserine occurs at positions 50, 57, 67, 96, 99, and 100. The segment covering 87–100 (TASASQAKLSPSSS) has biased composition (low complexity). Arginine 141 bears the Omega-N-methylarginine mark. 4 WD repeats span residues 173-212 (RTHGAVFNLEYSPDGSVLTVACEQTEVLLFDPISSKHIKT), 216-254 (AHEDCVNNIRFLDNRLFATCSDDTTIALWDLRKLNTKVC), 258-297 (GHTSWVKNIEYDTNTRLLVTSGFDGNVIIWDTNRCTEDGC), and 303-342 (FHTRFLMRMRLTPDCSKMLISTSSGYLLILHELDLTKSLE). Residues 354 to 374 (TTSSSDLTTTSSSSGSRVSGS) show a composition bias toward low complexity. The interval 354 to 413 (TTSSSDLTTTSSSSGSRVSGSPCHHNDSNSTEKHMSRASQREGVSPRNSLEVLTPEVPGE) is disordered. At serine 356 the chain carries Phosphoserine. Over residues 377 to 388 (HHNDSNSTEKHM) the composition is skewed to basic and acidic residues. WD repeat units lie at residues 415-455 (DRGN…QEGA), 477-515 (VGRGYIKELCFSPDGRMISSPHGYGIRLLGFDKQCSELV), and 533-566 (SHNDVVLTTKFSPTHCQIASGCLSGRVSLYQPKF).

This sequence belongs to the WD repeat DCAF10 family. Interacts with DDB1.

It participates in protein modification; protein ubiquitination. Its function is as follows. May function as a substrate receptor for CUL4-DDB1 E3 ubiquitin-protein ligase complex. This Mus musculus (Mouse) protein is DDB1- and CUL4-associated factor 10 (Dcaf10).